Consider the following 307-residue polypeptide: Oxygen-dependent coproporphyrinogen-III oxidase (307 aa).

Serine 99 contacts substrate. The a divalent metal cation site is built by histidine 103 and histidine 113. The active-site Proton donor is the histidine 113. 115–117 is a binding site for substrate; that stretch reads NVR. The a divalent metal cation site is built by histidine 152 and histidine 182. The important for dimerization stretch occupies residues 247-282; the sequence is YVEFNLVFDRGTLFGLQSGGRTESILLSMPPTAGWR. 265 to 267 is a binding site for substrate; that stretch reads GGR.

Belongs to the aerobic coproporphyrinogen-III oxidase family. As to quaternary structure, homodimer. A divalent metal cation is required as a cofactor.

It localises to the cytoplasm. The enzyme catalyses coproporphyrinogen III + O2 + 2 H(+) = protoporphyrinogen IX + 2 CO2 + 2 H2O. It participates in porphyrin-containing compound metabolism; protoporphyrin-IX biosynthesis; protoporphyrinogen-IX from coproporphyrinogen-III (O2 route): step 1/1. Its function is as follows. Involved in the heme biosynthesis. Catalyzes the aerobic oxidative decarboxylation of propionate groups of rings A and B of coproporphyrinogen-III to yield the vinyl groups in protoporphyrinogen-IX. In Burkholderia pseudomallei (strain 1106a), this protein is Oxygen-dependent coproporphyrinogen-III oxidase.